The following is a 216-amino-acid chain: Glutathione S-transferase 1, isoform B (216 aa).

The GST N-terminal domain occupies 1–80; it reads MDFYYLPGSA…YLVEKYGKPC (80 aa). Residues S9, 50–52, and 64–66 each bind glutathione; these read HCV and ESR. In terms of domain architecture, GST C-terminal spans 89–210; sequence DPQKRAIVNQ…RSWAEAARPF (122 aa).

The protein belongs to the GST superfamily. Theta family. Homodimer.

It catalyses the reaction RX + glutathione = an S-substituted glutathione + a halide anion + H(+). Its function is as follows. Conjugation of reduced glutathione to a wide number of exogenous and endogenous hydrophobic electrophiles. This Anopheles gambiae (African malaria mosquito) protein is Glutathione S-transferase 1, isoform B.